An 836-amino-acid polypeptide reads, in one-letter code: Sucrose synthase 5 (836 aa).

The segment at 270 to 748 is GT-B glycosyltransferase; the sequence is RIFNVVIFSV…GLQRINECYT (479 aa). The interval 805–836 is disordered; that stretch reads PPPLPPKPLVKPSASKGSKRTQPRLSFRLFGA.

The protein belongs to the glycosyltransferase 1 family. Plant sucrose synthase subfamily. In terms of tissue distribution, detected in the whole plant but more precisely confined to the vasculature in cotyledons, leaves, petals, anthers and roots. Also detected in developing siliques, young immature rosette and cauline leaves.

Its subcellular location is the secreted. It localises to the cell wall. The enzyme catalyses an NDP-alpha-D-glucose + D-fructose = a ribonucleoside 5'-diphosphate + sucrose + H(+). Sucrose-cleaving enzyme that provides UDP-glucose and fructose for various metabolic pathways. Functions in callose synthesis at the site of phloem sieve elements. In Arabidopsis thaliana (Mouse-ear cress), this protein is Sucrose synthase 5 (SUS5).